Here is a 297-residue protein sequence, read N- to C-terminus: tRNA dimethylallyltransferase (297 aa).

Gly15–Ser22 is a binding site for ATP. Thr17–Ser22 contributes to the substrate binding site. Interaction with substrate tRNA stretches follow at residues Asp40–Gln43 and Gln164–Arg168.

The protein belongs to the IPP transferase family. In terms of assembly, monomer. The cofactor is Mg(2+).

It catalyses the reaction adenosine(37) in tRNA + dimethylallyl diphosphate = N(6)-dimethylallyladenosine(37) in tRNA + diphosphate. Functionally, catalyzes the transfer of a dimethylallyl group onto the adenine at position 37 in tRNAs that read codons beginning with uridine, leading to the formation of N6-(dimethylallyl)adenosine (i(6)A). This chain is tRNA dimethylallyltransferase, found in Rhizobium etli (strain CIAT 652).